We begin with the raw amino-acid sequence, 200 residues long: Small ribosomal subunit protein uS4 (200 aa).

Residues Thr22–Lys42 form a disordered region. The 61-residue stretch at Ser92–Lys152 folds into the S4 RNA-binding domain.

It belongs to the universal ribosomal protein uS4 family. In terms of assembly, part of the 30S ribosomal subunit. Contacts protein S5. The interaction surface between S4 and S5 is involved in control of translational fidelity.

Functionally, one of the primary rRNA binding proteins, it binds directly to 16S rRNA where it nucleates assembly of the body of the 30S subunit. Its function is as follows. With S5 and S12 plays an important role in translational accuracy. The chain is Small ribosomal subunit protein uS4 from Bacillus licheniformis (strain ATCC 14580 / DSM 13 / JCM 2505 / CCUG 7422 / NBRC 12200 / NCIMB 9375 / NCTC 10341 / NRRL NRS-1264 / Gibson 46).